Reading from the N-terminus, the 354-residue chain is NADH-quinone oxidoreductase subunit H (354 aa).

Helical transmembrane passes span 16–36 (WLAVLITLVLQAVAVILPVMI), 90–110 (YLFIIAPILALAPAVAAWAVI), 126–146 (VLYVLAVASIGVYGIVISGWA), 170–190 (MGFALVTVLMVADTMNLTGIV), 197–217 (IWNWYWIPLLPMFFVYFISGL), 249–269 (VFFLAEYAMMILISFMTAIMF), 290–310 (VPGFVWLFAKVAFLLFLFLWF), and 329–349 (VLIPVTIVWVFVVGVMEYFKV).

The protein belongs to the complex I subunit 1 family. NDH-1 is composed of 14 different subunits. Subunits NuoA, H, J, K, L, M, N constitute the membrane sector of the complex.

It localises to the cell inner membrane. The catalysed reaction is a quinone + NADH + 5 H(+)(in) = a quinol + NAD(+) + 4 H(+)(out). NDH-1 shuttles electrons from NADH, via FMN and iron-sulfur (Fe-S) centers, to quinones in the respiratory chain. The immediate electron acceptor for the enzyme in this species is believed to be ubiquinone. Couples the redox reaction to proton translocation (for every two electrons transferred, four hydrogen ions are translocated across the cytoplasmic membrane), and thus conserves the redox energy in a proton gradient. This subunit may bind ubiquinone. The sequence is that of NADH-quinone oxidoreductase subunit H from Hydrogenovibrio crunogenus (strain DSM 25203 / XCL-2) (Thiomicrospira crunogena).